The chain runs to 270 residues: MAVITKIEVQKRSKERFNIYIDKGQGEEYGFSVDQVILMKHGLQKGLEIDEIELGNILYNEEVQKAYLQAISYLSYQMRTKQEIEDFLRKKEVGQAIISEVVSKLLHDRYINDKEYAVLYTRTQSNVNRKGPTVIKRELLNKGVQDLIIMHSLQEYPKEKQIENALFLIEKKKKSYQKHSFLQMKLKLDEMLVRKGYSREVIQICLEELKDERDDEKQQEALHYHGNKYYEKYKKYDGWTFENKMKQALYRKGFSIDEIEIFLQMKREEG.

This sequence belongs to the RecX family.

Its subcellular location is the cytoplasm. In terms of biological role, modulates RecA activity. This Bacillus cereus (strain G9842) protein is Regulatory protein RecX.